The sequence spans 338 residues: MNPRPLIGITMGDPVGIGPEIILTALAGTSVYEKCRPLVIGDPGVLGQAMAVAGYAPVIHMTDTPETGVYRPGTISMFSPAPPLSPVTWGEPTPETGGAMEAWITTAVDMAMAGAISAMVTCPINKEALKMAGSAFAGHTEMLAMRTGTNRYAMMLAGNRLRVVLVTIHTALQNVPGLLSVDAIADTILLTVESLKQRFGMNAPRVAVAGLNPHAGEGGLFGDEEARLITPAIEAARRKTEAAITGPWPPDTVFVKAAAGDFDAVVCMYHDQGLIPFKLLHFEDGVNTTLGLPIIRTSVDHGTAYDIAGTGRADCRSLTAAIDMAIDQAACLGKRPAA.

Positions 139 and 140 each coordinate substrate. His169, His214, and His270 together coordinate a divalent metal cation. 3 residues coordinate substrate: Lys278, Asn287, and Arg296.

Belongs to the PdxA family. Homodimer. It depends on Zn(2+) as a cofactor. Mg(2+) serves as cofactor. Requires Co(2+) as cofactor.

The protein resides in the cytoplasm. It carries out the reaction 4-(phosphooxy)-L-threonine + NAD(+) = 3-amino-2-oxopropyl phosphate + CO2 + NADH. It functions in the pathway cofactor biosynthesis; pyridoxine 5'-phosphate biosynthesis; pyridoxine 5'-phosphate from D-erythrose 4-phosphate: step 4/5. Functionally, catalyzes the NAD(P)-dependent oxidation of 4-(phosphooxy)-L-threonine (HTP) into 2-amino-3-oxo-4-(phosphooxy)butyric acid which spontaneously decarboxylates to form 3-amino-2-oxopropyl phosphate (AHAP). This Desulfosudis oleivorans (strain DSM 6200 / JCM 39069 / Hxd3) (Desulfococcus oleovorans) protein is 4-hydroxythreonine-4-phosphate dehydrogenase.